The sequence spans 304 residues: Thyroxine 5-deiodinase (304 aa).

The disordered stretch occupies residues 1 to 22 (MPRQAASRLVVGEGEGPPGASG). At 1–42 (MPRQAASRLVVGEGEGPPGASGPAATMLRSLLLHSLRLCAQT) the chain is on the cytoplasmic side. The chain crosses the membrane as a helical; Signal-anchor for type II membrane protein span at residues 43-62 (ASCLVLFPRFLGTAFMLWLL). Over 63-304 (DFLCIRKHFL…QLHGTRPRRL (242 aa)) the chain is Extracellular. Residue U170 is part of the active site. Residue U170 is a non-standard amino acid, selenocysteine.

This sequence belongs to the iodothyronine deiodinase family. Monomer. Homodimer. May undergo minor heretodimerization with DIO1 and DIO2. In terms of tissue distribution, neonatal skin, placenta, skeletal muscle and cerebral cortex.

The protein resides in the cell membrane. It is found in the endosome membrane. It carries out the reaction 3,3',5'-triiodo-L-thyronine + iodide + A + H(+) = L-thyroxine + AH2. The enzyme catalyses 3,3'-diiodo-L-thyronine + iodide + A + H(+) = 3,3',5-triiodo-L-thyronine + AH2. The catalysed reaction is 3-iodo-L-thyronine + iodide + A + H(+) = 3,5-diiodo-L-thyronine + AH2. It catalyses the reaction L-thyronine + iodide + A + H(+) = 3-iodo-L-thyronine + AH2. It carries out the reaction 3',5'-diiodo-L-thyronine + iodide + A + H(+) = 3,3',5'-triiodo-L-thyronine + AH2. The enzyme catalyses 3'-iodo-L-thyronine + iodide + A + H(+) = 3,3'-diiodo-L-thyronine + AH2. The catalysed reaction is 3,3',5'-triiodothyronamine + iodide + A + H(+) = 3,3',5,5'-tetraiodothyronamine + AH2. It catalyses the reaction 3',5'-diiodothyronamine + iodide + A + H(+) = 3,3',5'-triiodothyronamine + AH2. It carries out the reaction 3,3'-diiodothyronamine + iodide + A + H(+) = 3,3',5-triiodothyronamine + AH2. The enzyme catalyses 3-iodothyronamine + iodide + A + H(+) = 3,5-diiodothyronamine + AH2. The catalysed reaction is 3'-iodothyronamine + iodide + A + H(+) = 3,3'-diiodothyronamine + AH2. It catalyses the reaction thyronamine + iodide + A + H(+) = 3-iodothyronamine + AH2. Plays a crucial role in the metabolism of thyroid hormones (TH) and has specific roles in TH activation and inactivation by deiodination. Catalyzes the deiodination of L-thyroxine (T4) to 3,3',5'-triiodothyronine (rT3), 3,5-diiodothyronine (3,5-T2) to 3-monoiodothyronine (3-T1), rT3 to 3',5'-diiodothyronine (3',5'-T2) and 3,3'-diiodothyronine (3,3'-T2) to 3'-monoiodothyronine (3'-T1) via inner-ring deiodination (IRD). Catalyzes the deiodination of 3,5,3'-triiodothyronine (T3) to 3,3'-diiodothyronine (3,3'-T2) via IRD. Catalyzes the deiodination of 3-T1 to L-thyronine (T0) via outer-ring deiodination (ORD). Catalyzes the tyrosyl ring deiodinations of T4AM (3,3',5,5'-tetraiodothyronamine), rT3AM (3,3',5'-triiodothyronamine), T3AM (3,5,3'-triiodothyronamine), 3,5-T2AM (3,5-diiodothyronamine), 3,3'-T2AM (3,3'-diiodothyronamine) and 3-T1AM (3-iodothyronamine). The protein is Thyroxine 5-deiodinase (Dio3) of Rattus norvegicus (Rat).